The following is a 197-amino-acid chain: Chalcone--flavanone isomerase 2 (197 aa).

3 residues coordinate substrate: threonine 23, asparagine 88, and threonine 165.

Belongs to the chalcone isomerase family.

It catalyses the reaction a chalcone = a flavanone.. The protein operates within secondary metabolite biosynthesis; flavonoid biosynthesis. Catalyzes the intramolecular cyclization of bicyclic chalcones into tricyclic (S)-flavanones. Responsible for the isomerization of 4,2',4',6'-tetrahydroxychalcone (also termed chalcone) into naringenin. This chain is Chalcone--flavanone isomerase 2 (CHI2), found in Medicago sativa (Alfalfa).